The primary structure comprises 243 residues: 1-(5-phosphoribosyl)-5-[(5-phosphoribosylamino)methylideneamino] imidazole-4-carboxamide isomerase (243 aa).

The active-site Proton acceptor is the Asp-8. Asp-129 serves as the catalytic Proton donor.

This sequence belongs to the HisA/HisF family.

It localises to the cytoplasm. The enzyme catalyses 1-(5-phospho-beta-D-ribosyl)-5-[(5-phospho-beta-D-ribosylamino)methylideneamino]imidazole-4-carboxamide = 5-[(5-phospho-1-deoxy-D-ribulos-1-ylimino)methylamino]-1-(5-phospho-beta-D-ribosyl)imidazole-4-carboxamide. It functions in the pathway amino-acid biosynthesis; L-histidine biosynthesis; L-histidine from 5-phospho-alpha-D-ribose 1-diphosphate: step 4/9. The protein is 1-(5-phosphoribosyl)-5-[(5-phosphoribosylamino)methylideneamino] imidazole-4-carboxamide isomerase of Brucella abortus (strain 2308).